The following is a 1022-amino-acid chain: Integrator complex subunit 4 (1022 aa).

1D-myo-inositol hexakisphosphate is bound by residues Thr148 and Lys184. Residues 818–840 (KDEEEKPPVVETDMPMKESVSRD) are disordered.

This sequence belongs to the Integrator subunit 4 family. As to quaternary structure, belongs to the multiprotein complex Integrator, at least composed of IntS1, IntS2, IntS3, IntS4, omd/IntS5, IntS6, defl/IntS7, IntS8, IntS9, IntS10, IntS11, IntS12, asun/IntS13, IntS14 and IntS15. The core complex associates with protein phosphatase 2A subunits mts/PP2A and Pp2A-29B, to form the Integrator-PP2A (INTAC) complex. IntS4 is part of the RNA endonuclease subcomplex, composed of IntS4, IntS9, IntS11 and inositol hexakisphosphate (InsP6).

It is found in the nucleus. In terms of biological role, component of the integrator complex, a multiprotein complex that terminates RNA polymerase II (Pol II) transcription in the promoter-proximal region of genes. The integrator complex provides a quality checkpoint during transcription elongation by driving premature transcription termination of transcripts that are unfavorably configured for transcriptional elongation: the complex terminates transcription by (1) catalyzing dephosphorylation of the C-terminal domain (CTD) of Pol II subunit Polr2A/Rbp1 and Spt5, and (2) degrading the exiting nascent RNA transcript via endonuclease activity. The integrator complex is also involved in the 3'-end processing of the U7 snRNA, and also the spliceosomal snRNAs U1, U2, U4 and U5. This Drosophila melanogaster (Fruit fly) protein is Integrator complex subunit 4.